The chain runs to 196 residues: dTDP-4-dehydro-6-deoxyglucose 3-epimerase (196 aa).

Residues Arg21, Glu26, 45-47, and Arg57 each bind substrate; that span reads QVN. The active-site Proton acceptor is the His60. Substrate contacts are provided by Lys70 and Arg117. Residue Tyr130 is the Proton donor of the active site. Residues Glu141 and Arg166 each coordinate substrate.

The protein belongs to the dTDP-4-dehydrorhamnose 3,5-epimerase family. In terms of assembly, homodimer.

It carries out the reaction dTDP-4-dehydro-6-deoxy-alpha-D-glucose = dTDP-4-dehydro-6-deoxy-alpha-D-allose. Its pathway is antibiotic biosynthesis. In terms of biological role, involved in the biosynthesis of dTDP-6-deoxy-D-allose, an intermediate in the biosynthesis of mycinose, which is one of the two unusual sugars attached to the 16-membered macrolactone ring of the aglycone antibiotic dihydrochalcomycin (GERI-155). Catalyzes the conversion of dTDP-4-oxo-6-deoxyglucose to dTDP-4-oxo-6-deoxyallose, via a C-3 epimerization. The polypeptide is dTDP-4-dehydro-6-deoxyglucose 3-epimerase (Streptomyces sp).